Here is a 256-residue protein sequence, read N- to C-terminus: CCAAT/enhancer-binding protein delta (256 aa).

Ser2 bears the N-acetylserine mark. 3 disordered regions span residues 18–40 (TAEPAAFYEPGRAGKPGRGAEPA), 92–121 (GGPARLGGPGPAPRPLKREPDWGDGDAPGS), and 139–206 (AAAQ…NQEM). Residue Lys108 forms a Glycyl lysine isopeptide (Lys-Gly) (interchain with G-Cter in SUMO) linkage. The segment covering 143 to 162 (PTPPASPEPPRRSPAPPAPG) has biased composition (pro residues). Basic and acidic residues predominate over residues 164–188 (ARDKAAGKRGPDRGSPEYRQRRERN). A bZIP domain is found at 178-241 (SPEYRQRRER…AGLRRFFKQL (64 aa)). Positions 182-209 (RQRRERNNIAVRKSRDKAKRRNQEMQQK) are basic motif. A leucine-zipper region spans residues 213 to 241 (LSAENEKLQQRVEQLTRDLAGLRRFFKQL).

This sequence belongs to the bZIP family. C/EBP subfamily. In terms of assembly, binds DNA as a homodimer and as a heterodimer. Can form stable heterodimers with CEBPB. Can form stable heterodimers with CEBPA and CEBPE. Directly interacts with SPI1/PU.1; this interaction does not affect DNA-binding properties of each partner. Interacts with PRDM16.

It localises to the nucleus. In terms of biological role, transcription activator that recognizes two different DNA motifs: the CCAAT homology common to many promoters and the enhanced core homology common to many enhancers. Important transcription factor regulating the expression of genes involved in immune and inflammatory responses. Transcriptional activator that enhances IL6 transcription alone and as heterodimer with CEBPB. The protein is CCAAT/enhancer-binding protein delta (CEBPD) of Bos taurus (Bovine).